The following is a 441-amino-acid chain: MELKNCPLINEIKRQIGSHTHILVGFSGGVDSTVLLHGLVCLRDKYQLPLELTAIYVHHGLNSKADDWLTHCEHFCHNWQVSFISERVQVNGKEGGIEQGAREARYQAYRQYLQPNQVLVTAQHQDDQAETFLLALKRGSGPAGLSSMPAKMPFEQGYLLRPLLNITREQIEAYAHEHGLLWIEDDSNQDDRYDRNFLRLHVMPLLTQRWPHFSQAVTRSAALCGEQEALLDELLDVELQQLIDEHQSLDINLLSRCSEIKRNALLRRWFAKCNKSMPSRSQLSRLWQEVALAKADAEPRLRFFQDEVRRYQQRLYLVPVMEELTDRVIEWSLSQPLILPNQLGILAVSRDSGKTICRAPLADEKVTVRFGLTASSLRIVGRDLARSSKKIWQELNIAPWQRTRIPLIYYNDTLIAAVNTFVTLEGNATTEQSITIEWQAS.

Residue 27–32 (SGGVDS) participates in ATP binding.

Belongs to the tRNA(Ile)-lysidine synthase family.

It localises to the cytoplasm. The catalysed reaction is cytidine(34) in tRNA(Ile2) + L-lysine + ATP = lysidine(34) in tRNA(Ile2) + AMP + diphosphate + H(+). Ligates lysine onto the cytidine present at position 34 of the AUA codon-specific tRNA(Ile) that contains the anticodon CAU, in an ATP-dependent manner. Cytidine is converted to lysidine, thus changing the amino acid specificity of the tRNA from methionine to isoleucine. The polypeptide is tRNA(Ile)-lysidine synthase (Proteus mirabilis (strain HI4320)).